Here is a 146-residue protein sequence, read N- to C-terminus: Hemoglobin cathodic subunit beta (146 aa).

The region spanning 2 to 146 is the Globin domain; it reads EWSSSERSTI…LIHALSRQYF (145 aa). Histidine 63 and histidine 92 together coordinate heme b.

Belongs to the globin family. Heterotetramer of two alpha chains and two beta chains. Red blood cells.

Functionally, involved in oxygen transport from gills to the various peripheral tissues. This Gymnothorax unicolor (Brown moray) protein is Hemoglobin cathodic subunit beta.